Here is a 117-residue protein sequence, read N- to C-terminus: Large ribosomal subunit protein bL17 (117 aa).

Belongs to the bacterial ribosomal protein bL17 family. In terms of assembly, part of the 50S ribosomal subunit. Contacts protein L32.

This is Large ribosomal subunit protein bL17 from Thermomicrobium roseum (strain ATCC 27502 / DSM 5159 / P-2).